The following is a 675-amino-acid chain: Vitamin K-dependent protein S (675 aa).

An N-terminal signal peptide occupies residues 1-24 (MRVLSVRFRVLLACLALVLPNSET). A propeptide spanning residues 25-41 (NFLSKERASQVLVRKRR) is cleaved from the precursor. The Gla domain occupies 42–87 (ANTLLEETKKGNLERECIEELCNKEEAREVFENNPETDYFYPKYLG). 4-carboxyglutamate is present on residues glutamate 47, glutamate 48, glutamate 55, glutamate 57, glutamate 60, glutamate 61, glutamate 66, glutamate 67, glutamate 70, glutamate 73, and glutamate 77. Cysteines 58 and 63 form a disulfide. The segment at 88-116 (CLGAFRVGAFSAARQSANAYPDLRSCVNA) is thrombin-sensitive. Residues 117–155 (IPDQCDPMPCNEDGYLSCKDGQGAFTCICKPGWQGDKCQ) form the EGF-like 1 domain. Disulfide bonds link cysteine 121–cysteine 134, cysteine 126–cysteine 143, cysteine 145–cysteine 154, cysteine 161–cysteine 175, cysteine 171–cysteine 184, cysteine 186–cysteine 199, cysteine 205–cysteine 217, cysteine 212–cysteine 226, cysteine 228–cysteine 241, cysteine 247–cysteine 256, cysteine 252–cysteine 265, cysteine 267–cysteine 282, and cysteine 449–cysteine 475. Aspartate 136 carries the (3R)-3-hydroxyaspartate modification. In terms of domain architecture, EGF-like 2; calcium-binding spans 157-200 (DINECKDPSNINGGCSQTCDNTPGSYHCSCKIGFAMLTNKKDCK). The 42-residue stretch at 201 to 242 (DVDECSLKPSVCGTAVCKNIPGDFECECPNGYRYDPSSKSCK) folds into the EGF-like 3; calcium-binding domain. The 41-residue stretch at 243-283 (DVDECSENTCAQLCVNYPGGYSCYCDGKKGFKLAQDQRSCE) folds into the EGF-like 4; calcium-binding domain. Laminin G-like domains lie at 299 to 475 (LLYL…NKHC) and 484 to 665 (YYPG…AHSC). 2 N-linked (GlcNAc...) asparagine glycosylation sites follow: asparagine 499 and asparagine 509.

In terms of processing, the iron and 2-oxoglutarate dependent 3-hydroxylation of aspartate and asparagine is (R) stereospecific within EGF domains. In terms of tissue distribution, plasma.

The protein localises to the secreted. In terms of biological role, anticoagulant plasma protein; it is a cofactor to activated protein C in the degradation of coagulation factors Va and VIIIa. It helps to prevent coagulation and stimulating fibrinolysis. This Rattus norvegicus (Rat) protein is Vitamin K-dependent protein S (Pros1).